Here is a 348-residue protein sequence, read N- to C-terminus: Putative [LysW]-L-2-aminoadipate/[LysW]-L-glutamate phosphate reductase (348 aa).

9 to 12 (SGYV) contributes to the NADP(+) binding site. Residue cysteine 149 is part of the active site. Asparagine 315 contributes to the NADP(+) binding site.

This sequence belongs to the NAGSA dehydrogenase family. Type 1 subfamily. LysY sub-subfamily.

The protein localises to the cytoplasm. It carries out the reaction [amino-group carrier protein]-C-terminal-N-(1-carboxy-5-oxopentan-1-yl)-L-glutamine + phosphate + NADP(+) = [amino-group carrier protein]-C-terminal-N-(1-carboxy-5-phosphooxy-5-oxopentan-1-yl)-L-glutamine + NADPH + H(+). The catalysed reaction is [amino-group carrier protein]-C-terminal-gamma-(L-glutamyl-5-semialdehyde)-L-glutamate + phosphate + NADP(+) = [amino-group carrier protein]-C-terminal-gamma-(5-phospho-L-glutamyl)-L-glutamate + NADPH + H(+). It participates in amino-acid biosynthesis; L-lysine biosynthesis via AAA pathway; L-lysine from L-alpha-aminoadipate (Thermus route): step 3/5. It functions in the pathway amino-acid biosynthesis; L-arginine biosynthesis. Involved in both the arginine and lysine biosynthetic pathways. This is Putative [LysW]-L-2-aminoadipate/[LysW]-L-glutamate phosphate reductase from Nitrosopumilus maritimus (strain SCM1).